The chain runs to 123 residues: UPF0102 protein Cbei_1183 (123 aa).

It belongs to the UPF0102 family.

The chain is UPF0102 protein Cbei_1183 from Clostridium beijerinckii (strain ATCC 51743 / NCIMB 8052) (Clostridium acetobutylicum).